Consider the following 410-residue polypeptide: Argininosuccinate synthase (410 aa).

10–18 (AYSGGLDTS) is a binding site for ATP. Positions 88 and 93 each coordinate L-citrulline. Gly-118 serves as a coordination point for ATP. Thr-120, Asn-124, and Asp-125 together coordinate L-aspartate. Position 124 (Asn-124) interacts with L-citrulline. L-citrulline-binding residues include Arg-128, Ser-177, Ser-186, Glu-262, and Tyr-274.

This sequence belongs to the argininosuccinate synthase family. Type 1 subfamily. As to quaternary structure, homotetramer.

Its subcellular location is the cytoplasm. It carries out the reaction L-citrulline + L-aspartate + ATP = 2-(N(omega)-L-arginino)succinate + AMP + diphosphate + H(+). Its pathway is amino-acid biosynthesis; L-arginine biosynthesis; L-arginine from L-ornithine and carbamoyl phosphate: step 2/3. The protein is Argininosuccinate synthase of Thermoanaerobacter pseudethanolicus (strain ATCC 33223 / 39E) (Clostridium thermohydrosulfuricum).